Here is a 617-residue protein sequence, read N- to C-terminus: NADPH-dependent diflavin oxidoreductase 1 (617 aa).

The Flavodoxin-like domain occupies 3-147; that stretch reads PMILYASETG…AFLPWLQQTL (145 aa). FMN-binding positions include 9–14, 56–59, 94–103, and Glu129; these read SETGNA, STHG, and LGDSSYERFC. The FAD-binding FR-type domain maps to 226–465; that stretch reads DDWVWATLKK…HIASPTLFLP (240 aa). FAD contacts are provided by residues 404–407 and 438–441; these read RQFS and GLCS. NADP(+)-binding positions include Thr479, 534–535, and 540–544; these read SR and RIYVQ. Trp617 serves as a coordination point for FAD.

This sequence belongs to the NADPH-dependent diflavin oxidoreductase NDOR1 family. It in the N-terminal section; belongs to the flavodoxin family. In the C-terminal section; belongs to the flavoprotein pyridine nucleotide cytochrome reductase family. Interacts with DRE2; as part of the cytosolic iron-sulfur (Fe-S) protein assembly (CIA) machinery. It depends on FAD as a cofactor. The cofactor is FMN.

It localises to the cytoplasm. The protein resides in the mitochondrion. The catalysed reaction is 2 oxidized [2Fe-2S]-[protein] + NADPH = 2 reduced [2Fe-2S]-[protein] + NADP(+) + H(+). In terms of biological role, NADPH-dependent reductase which is a central component of the cytosolic iron-sulfur (Fe-S) protein assembly (CIA) machinery. Transfers electrons from NADPH via its FAD and FMN prosthetic groups to the [2Fe-2S] cluster of DRE2, another key component of the CIA machinery. In turn, this reduced cluster provides electrons for assembly of cytosolic iron-sulfur cluster proteins. Positively controls H(2)O(2)-induced cell death. In Cryptococcus neoformans var. neoformans serotype D (strain B-3501A) (Filobasidiella neoformans), this protein is NADPH-dependent diflavin oxidoreductase 1.